The sequence spans 378 residues: Carbamoyl phosphate synthase small chain (378 aa).

Residues M1–N188 are CPSase. L-glutamine is bound by residues S49, G244, and G246. A Glutamine amidotransferase type-1 domain is found at K192–K378. C272 functions as the Nucleophile in the catalytic mechanism. Residues L273, Q276, N314, and Y317 each contribute to the L-glutamine site. Residues H355 and E357 contribute to the active site.

The protein belongs to the CarA family. As to quaternary structure, composed of two chains; the small (or glutamine) chain promotes the hydrolysis of glutamine to ammonia, which is used by the large (or ammonia) chain to synthesize carbamoyl phosphate. Tetramer of heterodimers (alpha,beta)4.

The enzyme catalyses hydrogencarbonate + L-glutamine + 2 ATP + H2O = carbamoyl phosphate + L-glutamate + 2 ADP + phosphate + 2 H(+). It carries out the reaction L-glutamine + H2O = L-glutamate + NH4(+). It functions in the pathway amino-acid biosynthesis; L-arginine biosynthesis; carbamoyl phosphate from bicarbonate: step 1/1. The protein operates within pyrimidine metabolism; UMP biosynthesis via de novo pathway; (S)-dihydroorotate from bicarbonate: step 1/3. Small subunit of the glutamine-dependent carbamoyl phosphate synthetase (CPSase). CPSase catalyzes the formation of carbamoyl phosphate from the ammonia moiety of glutamine, carbonate, and phosphate donated by ATP, constituting the first step of 2 biosynthetic pathways, one leading to arginine and/or urea and the other to pyrimidine nucleotides. The small subunit (glutamine amidotransferase) binds and cleaves glutamine to supply the large subunit with the substrate ammonia. In Helicobacter hepaticus (strain ATCC 51449 / 3B1), this protein is Carbamoyl phosphate synthase small chain.